Consider the following 341-residue polypeptide: S-adenosylmethionine:tRNA ribosyltransferase-isomerase (341 aa).

This sequence belongs to the QueA family. Monomer.

Its subcellular location is the cytoplasm. It carries out the reaction 7-aminomethyl-7-carbaguanosine(34) in tRNA + S-adenosyl-L-methionine = epoxyqueuosine(34) in tRNA + adenine + L-methionine + 2 H(+). The protein operates within tRNA modification; tRNA-queuosine biosynthesis. Its function is as follows. Transfers and isomerizes the ribose moiety from AdoMet to the 7-aminomethyl group of 7-deazaguanine (preQ1-tRNA) to give epoxyqueuosine (oQ-tRNA). The chain is S-adenosylmethionine:tRNA ribosyltransferase-isomerase from Staphylococcus epidermidis (strain ATCC 35984 / DSM 28319 / BCRC 17069 / CCUG 31568 / BM 3577 / RP62A).